An 819-amino-acid polypeptide reads, in one-letter code: Meiotically up-regulated gene 45 protein (819 aa).

Residues 797–817 (AMCLLTLLIGIYLILQVVFIY) traverse the membrane as a helical segment.

The protein resides in the membrane. Its function is as follows. Has a role in meiosis. The chain is Meiotically up-regulated gene 45 protein (mug45) from Schizosaccharomyces pombe (strain 972 / ATCC 24843) (Fission yeast).